The chain runs to 689 residues: Translation initiation factor IF-2 (689 aa).

The segment at 70-107 (VRSKKNSNKKKKKGKGNQDKRQENFAGKQQAQTVETPD) is disordered. Over residues 71-84 (RSKKNSNKKKKKGK) the composition is skewed to basic residues. The 170-residue stretch at 191-360 (ERPAVVTIMG…LLVSEVEEYK (170 aa)) folds into the tr-type G domain. Positions 200–207 (GHVDHGKT) are G1. Residue 200-207 (GHVDHGKT) participates in GTP binding. The interval 225-229 (GITQH) is G2. Positions 246–249 (DTPG) are G3. Residues 246-250 (DTPGH) and 300-303 (NKMD) each bind GTP. The G4 stretch occupies residues 300–303 (NKMD). Residues 336–338 (SAI) are G5.

Belongs to the TRAFAC class translation factor GTPase superfamily. Classic translation factor GTPase family. IF-2 subfamily.

The protein localises to the cytoplasm. Its function is as follows. One of the essential components for the initiation of protein synthesis. Protects formylmethionyl-tRNA from spontaneous hydrolysis and promotes its binding to the 30S ribosomal subunits. Also involved in the hydrolysis of GTP during the formation of the 70S ribosomal complex. This Bacillus cytotoxicus (strain DSM 22905 / CIP 110041 / 391-98 / NVH 391-98) protein is Translation initiation factor IF-2.